The following is a 275-amino-acid chain: uncharacterized protein (275 aa).

The protein localises to the virion. This is an uncharacterized protein from Acanthamoeba polyphaga (Amoeba).